A 75-amino-acid polypeptide reads, in one-letter code: Small ribosomal subunit protein bS18c (75 aa).

The protein belongs to the bacterial ribosomal protein bS18 family. Part of the 30S ribosomal subunit.

It is found in the plastid. The protein resides in the chloroplast. The polypeptide is Small ribosomal subunit protein bS18c (Angiopteris evecta (Mule's foot fern)).